The primary structure comprises 252 residues: Phosphoglycolate phosphatase (252 aa).

D13 (nucleophile) is an active-site residue. Positions 13, 15, and 192 each coordinate Mg(2+).

This sequence belongs to the HAD-like hydrolase superfamily. CbbY/CbbZ/Gph/YieH family. Monomer. Mg(2+) serves as cofactor. It depends on chloride as a cofactor.

It catalyses the reaction 2-phosphoglycolate + H2O = glycolate + phosphate. The protein operates within organic acid metabolism; glycolate biosynthesis; glycolate from 2-phosphoglycolate: step 1/1. In terms of biological role, specifically catalyzes the dephosphorylation of 2-phosphoglycolate. Is involved in the dissimilation of the intracellular 2-phosphoglycolate formed during the DNA repair of 3'-phosphoglycolate ends, a major class of DNA lesions induced by oxidative stress. In Salmonella typhimurium (strain LT2 / SGSC1412 / ATCC 700720), this protein is Phosphoglycolate phosphatase.